The sequence spans 237 residues: MTPEDFYMALKELGFDLSQKQKDQFQRYFELLVEWNEKINLTAITDKDEVFLKHFYDSLAPVLQGHIKNQSIQLLDIGAGAGFPSLPIKILCPNLDVTIIDSLNKRITFLNFLSDELGLSGVHFYHGRAEDFGQDKAFRAQFDIVTARAVARMQVLSELTIPFLKVGGQLIALKAAAADQELVDARNALNVLFAKPILNENYKLPNGDGRNITIIDKKKETPNKYPRRAGIPNKKPL.

Residues glycine 78, phenylalanine 83, 129–130 (AE), and arginine 148 contribute to the S-adenosyl-L-methionine site.

This sequence belongs to the methyltransferase superfamily. RNA methyltransferase RsmG family.

It is found in the cytoplasm. Specifically methylates the N7 position of a guanine in 16S rRNA. This is Ribosomal RNA small subunit methyltransferase G from Streptococcus thermophilus (strain CNRZ 1066).